The primary structure comprises 364 residues: tRNA 2-selenouridine synthase (364 aa).

A Rhodanese domain is found at 14–137; it reads LIADTPIIDV…LRQTAIQATI (124 aa). The active-site S-selanylcysteine intermediate is cysteine 97.

It belongs to the SelU family. As to quaternary structure, monomer.

It carries out the reaction 5-methylaminomethyl-2-thiouridine(34) in tRNA + selenophosphate + (2E)-geranyl diphosphate + H2O + H(+) = 5-methylaminomethyl-2-selenouridine(34) in tRNA + (2E)-thiogeraniol + phosphate + diphosphate. The catalysed reaction is 5-methylaminomethyl-2-thiouridine(34) in tRNA + (2E)-geranyl diphosphate = 5-methylaminomethyl-S-(2E)-geranyl-thiouridine(34) in tRNA + diphosphate. The enzyme catalyses 5-methylaminomethyl-S-(2E)-geranyl-thiouridine(34) in tRNA + selenophosphate + H(+) = 5-methylaminomethyl-2-(Se-phospho)selenouridine(34) in tRNA + (2E)-thiogeraniol. It catalyses the reaction 5-methylaminomethyl-2-(Se-phospho)selenouridine(34) in tRNA + H2O = 5-methylaminomethyl-2-selenouridine(34) in tRNA + phosphate. Involved in the post-transcriptional modification of the uridine at the wobble position (U34) of tRNA(Lys), tRNA(Glu) and tRNA(Gln). Catalyzes the conversion of 2-thiouridine (S2U-RNA) to 2-selenouridine (Se2U-RNA). Acts in a two-step process involving geranylation of 2-thiouridine (S2U) to S-geranyl-2-thiouridine (geS2U) and subsequent selenation of the latter derivative to 2-selenouridine (Se2U) in the tRNA chain. The polypeptide is tRNA 2-selenouridine synthase (Escherichia coli O17:K52:H18 (strain UMN026 / ExPEC)).